The following is a 236-amino-acid chain: 2-C-methyl-D-erythritol 4-phosphate cytidylyltransferase (236 aa).

It belongs to the IspD/TarI cytidylyltransferase family. IspD subfamily.

It carries out the reaction 2-C-methyl-D-erythritol 4-phosphate + CTP + H(+) = 4-CDP-2-C-methyl-D-erythritol + diphosphate. It participates in isoprenoid biosynthesis; isopentenyl diphosphate biosynthesis via DXP pathway; isopentenyl diphosphate from 1-deoxy-D-xylulose 5-phosphate: step 2/6. Catalyzes the formation of 4-diphosphocytidyl-2-C-methyl-D-erythritol from CTP and 2-C-methyl-D-erythritol 4-phosphate (MEP). The chain is 2-C-methyl-D-erythritol 4-phosphate cytidylyltransferase from Pseudomonas savastanoi pv. phaseolicola (strain 1448A / Race 6) (Pseudomonas syringae pv. phaseolicola (strain 1448A / Race 6)).